The chain runs to 483 residues: uncharacterized protein (483 aa).

Residues 96 to 137 form a WD repeat; sequence IQCDQDPLSSISWSPSGELLLWSSFDSKITVWSLNTQKGYLL.

This is an uncharacterized protein from Schizosaccharomyces pombe (strain 972 / ATCC 24843) (Fission yeast).